Reading from the N-terminus, the 174-residue chain is ATP-dependent protease subunit HslV (174 aa).

Residue T2 is part of the active site. Residues G157, C160, and T163 each coordinate Na(+).

This sequence belongs to the peptidase T1B family. HslV subfamily. As to quaternary structure, a double ring-shaped homohexamer of HslV is capped on each side by a ring-shaped HslU homohexamer. The assembly of the HslU/HslV complex is dependent on binding of ATP.

Its subcellular location is the cytoplasm. The catalysed reaction is ATP-dependent cleavage of peptide bonds with broad specificity.. Allosterically activated by HslU binding. Protease subunit of a proteasome-like degradation complex believed to be a general protein degrading machinery. The protein is ATP-dependent protease subunit HslV of Shewanella woodyi (strain ATCC 51908 / MS32).